The following is a 221-amino-acid chain: 6-phosphogluconate phosphatase (221 aa).

The active-site Nucleophile is the Asp-10. Asp-10, Asp-12, and Asp-167 together coordinate Mg(2+). 10 to 12 (DCD) is a substrate binding site.

It belongs to the HAD-like hydrolase superfamily. CbbY/CbbZ/Gph/YieH family. Mg(2+) serves as cofactor. The cofactor is Mn(2+). It depends on Co(2+) as a cofactor. Requires Zn(2+) as cofactor.

Catalyzes strongly the dephosphorylation of 6-phosphogluconate (6P-Glu) and slightly the dephosphorylation of dihydroxyacetone phosphate (DHAP) and phosphoenolpyruvate (PEP). Also hydrolyzes both purines (GMP and IMP) and pyrimidines as secondary substrates. This chain is 6-phosphogluconate phosphatase (yieH), found in Escherichia coli (strain K12).